The primary structure comprises 331 residues: Ketol-acid reductoisomerase (NADP(+)) (331 aa).

The 181-residue stretch at 2–182 folds into the KARI N-terminal Rossmann domain; the sequence is ARMYYDQDAN…GGTRAGILET (181 aa). Residues 25-28, Ser51, Ser53, and 83-86 contribute to the NADP(+) site; these read YGSQ and DEVQ. His108 is an active-site residue. Gly134 lines the NADP(+) pocket. Residues 183 to 328 enclose the KARI C-terminal knotted domain; that stretch reads TFREETETDL…KDLRAMFSWL (146 aa). The Mg(2+) site is built by Asp191, Glu195, Glu227, and Glu231. Ser252 is a substrate binding site.

Belongs to the ketol-acid reductoisomerase family. In terms of assembly, homooctamer. Mg(2+) serves as cofactor.

The catalysed reaction is (2R)-2,3-dihydroxy-3-methylbutanoate + NADP(+) = (2S)-2-acetolactate + NADPH + H(+). The enzyme catalyses (2R,3R)-2,3-dihydroxy-3-methylpentanoate + NADP(+) = (S)-2-ethyl-2-hydroxy-3-oxobutanoate + NADPH + H(+). Its pathway is amino-acid biosynthesis; L-isoleucine biosynthesis; L-isoleucine from 2-oxobutanoate: step 2/4. It functions in the pathway amino-acid biosynthesis; L-valine biosynthesis; L-valine from pyruvate: step 2/4. In terms of biological role, involved in the biosynthesis of branched-chain amino acids (BCAA). Catalyzes an alkyl-migration followed by a ketol-acid reduction of (S)-2-acetolactate (S2AL) to yield (R)-2,3-dihydroxy-isovalerate. In the isomerase reaction, S2AL is rearranged via a Mg-dependent methyl migration to produce 3-hydroxy-3-methyl-2-ketobutyrate (HMKB). In the reductase reaction, this 2-ketoacid undergoes a metal-dependent reduction by NADPH to yield (R)-2,3-dihydroxy-isovalerate. The protein is Ketol-acid reductoisomerase (NADP(+)) of Synechocystis sp. (strain ATCC 27184 / PCC 6803 / Kazusa).